The chain runs to 511 residues: Lysine--tRNA ligase (511 aa).

The Mg(2+) site is built by glutamate 421 and glutamate 428.

The protein belongs to the class-II aminoacyl-tRNA synthetase family. As to quaternary structure, homodimer. Mg(2+) serves as cofactor.

Its subcellular location is the cytoplasm. The enzyme catalyses tRNA(Lys) + L-lysine + ATP = L-lysyl-tRNA(Lys) + AMP + diphosphate. This Aeromonas hydrophila subsp. hydrophila (strain ATCC 7966 / DSM 30187 / BCRC 13018 / CCUG 14551 / JCM 1027 / KCTC 2358 / NCIMB 9240 / NCTC 8049) protein is Lysine--tRNA ligase.